The sequence spans 359 residues: NAC domain-containing protein 45 (359 aa).

Positions 19 to 185 (LPPGFRFHPT…EWVVCKVFHK (167 aa)) constitute an NAC domain. A DNA-binding region spans residues 130-191 (VGMKKTLVFY…VFHKKGDDRE (62 aa)).

Expressed in roots. Expressed at low levels in leaves, stems and panicles.

The protein localises to the nucleus. In terms of biological role, transcription activator involved in responses to drought stress and salt stress. Transactivates the stress response genes LEA19 and PM19L. The polypeptide is NAC domain-containing protein 45 (Oryza sativa subsp. japonica (Rice)).